The primary structure comprises 385 residues: Phosphate acyltransferase (385 aa).

The span at 1 to 17 shows a compositional bias: low complexity; that stretch reads MAAGTSIGTTPGGSTSP. Residues 1 to 28 form a disordered region; the sequence is MAAGTSIGTTPGGSTSPETPPEHGLTGT.

Belongs to the PlsX family. In terms of assembly, homodimer. Probably interacts with PlsY.

It is found in the cytoplasm. It catalyses the reaction a fatty acyl-[ACP] + phosphate = an acyl phosphate + holo-[ACP]. The protein operates within lipid metabolism; phospholipid metabolism. In terms of biological role, catalyzes the reversible formation of acyl-phosphate (acyl-PO(4)) from acyl-[acyl-carrier-protein] (acyl-ACP). This enzyme utilizes acyl-ACP as fatty acyl donor, but not acyl-CoA. The protein is Phosphate acyltransferase of Dinoroseobacter shibae (strain DSM 16493 / NCIMB 14021 / DFL 12).